Here is a 431-residue protein sequence, read N- to C-terminus: Ribosomal RNA small subunit methyltransferase B (431 aa).

S-adenosyl-L-methionine-binding positions include 254 to 260 (CAAPGGK), Asp277, Asp303, and Asp322. The active-site Nucleophile is Cys375.

It belongs to the class I-like SAM-binding methyltransferase superfamily. RsmB/NOP family.

The protein resides in the cytoplasm. The enzyme catalyses cytidine(967) in 16S rRNA + S-adenosyl-L-methionine = 5-methylcytidine(967) in 16S rRNA + S-adenosyl-L-homocysteine + H(+). In terms of biological role, specifically methylates the cytosine at position 967 (m5C967) of 16S rRNA. The polypeptide is Ribosomal RNA small subunit methyltransferase B (Klebsiella pneumoniae subsp. pneumoniae (strain ATCC 700721 / MGH 78578)).